We begin with the raw amino-acid sequence, 366 residues long: Putative actin-9 (366 aa).

Belongs to the actin family. As to quaternary structure, polymerization of globular actin (G-actin) leads to a structural filament (F-actin) in the form of a two-stranded helix. The binding of profilin to monomeric G-actin cause the sequestration of actin into profilactin complexes, and prevents the polymerization.

It localises to the cytoplasm. Its subcellular location is the cytoskeleton. Actins are highly conserved proteins that are involved in various types of cell motility and are ubiquitously expressed in all eukaryotic cells. Essential component of cell cytoskeleton; plays an important role in cytoplasmic streaming, cell shape determination, cell division, organelle movement and extension growth. This Arabidopsis thaliana (Mouse-ear cress) protein is Putative actin-9 (ACT9).